The following is a 515-amino-acid chain: MAVVRVRAIVALLCLVAALGLAEPLEEEDGVLVLRAANFEQALAAHRHLLVEFYAPWCGHCKALAPEYAKAAAQLKAEGSEIRLAKVDATEEAELAQQFGVRGYPTIKFFRNGDKAAPREYTAGREADDIVSWLKKRTGPAATTLTDAAAAETLVDSSEVVVIGFFKDVTSDAAKEFLLAAESVDDIPFGISSSADVFSKYQLSQDGVVLFKKFDEGRNNFEGDLTKDNLLNFIKSNQLPLVIEFTEQTAPKIFGGEIKTHILLFLPKSVSDYEGKLDNFKTAAGNFKGKILFIFIDSDHSDNQRILEFFGLKKEECPAVRLITLEEEMTKYKPESDDLTADKIKEFCNKFLEGKIKPHLMSQDLPEDWDKQPVKVLVGKNFEEVAFDENKNVFVEFYAPWCGHCKQLAPIWDKLGETYRDHENIVIAKMDSTANEVEAVKIHSFPTLKFFPAGSGRNVIDYNGERTLEGFKKFLESGGQDGAAADDDLEDLETDEETDLEEGDDDEQKIQKDEL.

The N-terminal stretch at 1–22 is a signal peptide; the sequence is MAVVRVRAIVALLCLVAALGLA. Thioredoxin domains lie at 23-139 and 351-480; these read EPLE…KRTG and FLEG…SGGQ. Residues Cys-58, Cys-61, Cys-402, and Cys-405 each act as nucleophile in the active site. 2 cysteine pairs are disulfide-bonded: Cys-58/Cys-61 and Cys-402/Cys-405. A disordered region spans residues 477–515; that stretch reads SGGQDGAAADDDLEDLETDEETDLEEGDDDEQKIQKDEL. Residues 484–507 are compositionally biased toward acidic residues; it reads AADDDLEDLETDEETDLEEGDDDE. A Prevents secretion from ER motif is present at residues 512-515; that stretch reads KDEL.

It belongs to the protein disulfide isomerase family. In terms of assembly, heterodimer; heterodimerizes with the protein microsomal triglyceride transfer MTTP. Homodimer. Monomers and homotetramers may also occur. Also constitutes the structural subunit of prolyl 4-hydroxylase. Stabilizes this enzyme and retains it in the ER without contributing to the catalytic activity. Binds UBQLN1.

It is found in the endoplasmic reticulum. The protein resides in the endoplasmic reticulum lumen. It localises to the cell membrane. It catalyses the reaction Catalyzes the rearrangement of -S-S- bonds in proteins.. Its function is as follows. This multifunctional protein catalyzes the formation, breakage and rearrangement of disulfide bonds. At the cell surface, seems to act as a reductase that cleaves disulfide bonds of proteins attached to the cell. May therefore cause structural modifications of exofacial proteins. Inside the cell, seems to form/rearrange disulfide bonds of nascent proteins. At high concentrations, functions as a chaperone that inhibits aggregation of misfolded proteins. At low concentrations, facilitates aggregation (anti-chaperone activity). Also acts a structural subunit of various enzymes such as prolyl 4-hydroxylase. This is Protein disulfide-isomerase (P4HB) from Gallus gallus (Chicken).